The following is a 131-amino-acid chain: Small ribosomal subunit protein uS8 (131 aa).

Belongs to the universal ribosomal protein uS8 family. In terms of assembly, part of the 30S ribosomal subunit. Contacts proteins S5 and S12.

In terms of biological role, one of the primary rRNA binding proteins, it binds directly to 16S rRNA central domain where it helps coordinate assembly of the platform of the 30S subunit. The chain is Small ribosomal subunit protein uS8 from Bacteroides thetaiotaomicron (strain ATCC 29148 / DSM 2079 / JCM 5827 / CCUG 10774 / NCTC 10582 / VPI-5482 / E50).